The following is a 111-amino-acid chain: UPF0145 protein Bphy_3680 (111 aa).

Belongs to the UPF0145 family.

The chain is UPF0145 protein Bphy_3680 from Paraburkholderia phymatum (strain DSM 17167 / CIP 108236 / LMG 21445 / STM815) (Burkholderia phymatum).